Here is a 1017-residue protein sequence, read N- to C-terminus: Voltage-gated delayed rectifier potassium channel KCNH4 (1017 aa).

Residues 1 to 228 (MPVMKGLLAP…LLHYSVSKAI (228 aa)) are Cytoplasmic-facing. The 77-residue stretch at 14-90 (FLDTIATRFD…QRLHKALEGH (77 aa)) folds into the PAS domain. A PAC domain is found at 93–145 (HRAEICFYRKDGSAFWCLLDMMPIKNEMGEVVLFLFSFKDITQSGSPGLGPQG). Positions 138–157 (SPGLGPQGGRGDSNHENSLG) are disordered. A compositionally biased stretch (gly residues) spans 139-148 (PGLGPQGGRG). Residues 229–249 (WDGLILLATFYVAVTVPYNVC) form a helical membrane-spanning segment. Residues 250–259 (FSGDDDTPIT) lie on the Extracellular side of the membrane. A helical transmembrane segment spans residues 260 to 280 (SRHTLVSDIAVEMLFILDIIL). Residues 281 to 302 (NFRTTYVSQSGQVISAPRSIGL) are Cytoplasmic-facing. A helical transmembrane segment spans residues 303-323 (HYLATWFFIDLIAALPFDLLY). Residues 324-332 (IFNITVTSL) are Extracellular-facing. A glycan (N-linked (GlcNAc...) asparagine) is linked at asparagine 326. A helical; Voltage-sensor membrane pass occupies residues 333–353 (VHLLKTVRLLRLLRLLQKLER). The Cytoplasmic portion of the chain corresponds to 354-361 (YSQCSAVV). Residues 362–382 (LTLLMSVFALLAHWMACIWYV) form a helical membrane-spanning segment. Over 383-427 (IGRREMEANDPLLWDIGWLHELGKRLEVPYVNGSVGGPSRRSAYI) the chain is Extracellular. N-linked (GlcNAc...) asparagine glycosylation occurs at asparagine 414. Residues 428–448 (AALYFTLSSLTSVGFGNVCAN) constitute an intramembrane region (pore-forming). Positions 439–444 (SVGFGN) match the Selectivity filter motif. Topologically, residues 449–482 (TDAEKIFSICTMLIGALMHAVVFGNVTAIIQRMY) are extracellular. The N-linked (GlcNAc...) asparagine glycan is linked to asparagine 473. The helical transmembrane segment at 483–503 (SRRSLYHSRMKDLKDFIRVHR) threads the bilayer. The Cytoplasmic segment spans residues 504–1017 (LPRPLKQRML…SFQSRSDTFH (514 aa)). A cNMP-binding domain region spans residues 556-620 (LFGAASRGCL…AILGKGDLIG (65 aa)). Over residues 691-724 (GSDTSGLSRFSRSPRLSQPRSESLGSSSDKTLPS) the composition is skewed to polar residues. Disordered stretches follow at residues 691 to 749 (GSDT…LPNL), 772 to 803 (LVSS…RCSA), 821 to 875 (PDLS…EAEE), and 971 to 1017 (LLDL…DTFH). Over residues 772 to 787 (LVSSPSLSPSLSPALA) the composition is skewed to low complexity. A compositionally biased stretch (pro residues) spans 978 to 1002 (ILPPYPSEPDPLGPSPVPEASPPTP). Polar residues predominate over residues 1008–1017 (SFQSRSDTFH).

This sequence belongs to the potassium channel family. H (Eag) (TC 1.A.1.20) subfamily. Kv12.3/KCNH4 sub-subfamily. In terms of assembly, the potassium channel is probably composed of a homo- or heterotetrameric complex of pore-forming alpha subunits that can associate with modulating beta subunits. In terms of tissue distribution, detected only in brain, in particular in the telencephalon. Detected in putamen and caudate nucleus, and at lower levels in cerebral cortex, occipital and hippocampus.

The protein resides in the membrane. The catalysed reaction is K(+)(in) = K(+)(out). Its function is as follows. Pore-forming (alpha) subunit of a voltage-gated delayed rectifier. Activates at more negative voltages, exhibits fast prepulse-independent activation kinetics and deactivates much more slowly, but shows no inactivation. This chain is Voltage-gated delayed rectifier potassium channel KCNH4, found in Homo sapiens (Human).